We begin with the raw amino-acid sequence, 429 residues long: Serine hydroxymethyltransferase (429 aa).

(6S)-5,6,7,8-tetrahydrofolate contacts are provided by residues Leu-130 and 134-136; that span reads GHL. Lys-239 bears the N6-(pyridoxal phosphate)lysine mark.

This sequence belongs to the SHMT family. As to quaternary structure, homodimer. It depends on pyridoxal 5'-phosphate as a cofactor.

Its subcellular location is the cytoplasm. It catalyses the reaction (6R)-5,10-methylene-5,6,7,8-tetrahydrofolate + glycine + H2O = (6S)-5,6,7,8-tetrahydrofolate + L-serine. It functions in the pathway one-carbon metabolism; tetrahydrofolate interconversion. Its pathway is amino-acid biosynthesis; glycine biosynthesis; glycine from L-serine: step 1/1. In terms of biological role, catalyzes the reversible interconversion of serine and glycine with tetrahydrofolate (THF) serving as the one-carbon carrier. This reaction serves as the major source of one-carbon groups required for the biosynthesis of purines, thymidylate, methionine, and other important biomolecules. Also exhibits THF-independent aldolase activity toward beta-hydroxyamino acids, producing glycine and aldehydes, via a retro-aldol mechanism. The sequence is that of Serine hydroxymethyltransferase from Phenylobacterium zucineum (strain HLK1).